We begin with the raw amino-acid sequence, 424 residues long: Choline-phosphate cytidylyltransferase (424 aa).

Residues 1–70 (MANPTTGKSS…RKRRRLTKEF (70 aa)) form a disordered region. Residues 14-24 (KLSNSSLSNLF) are compositionally biased toward low complexity. At S16 the chain carries Phosphoserine. Over residues 35-44 (ETEEQDNEDK) the composition is skewed to acidic residues. A compositionally biased stretch (basic and acidic residues) spans 45-55 (DESKNQDENKD). At T59 the chain carries Phosphothreonine. CTP contacts are provided by residues 111 to 119 (VFDLFHLGH) and K149. Substrate-binding residues include K149 and W178. CTP-binding positions include 195–196 (HD), Y200, and 223–227 (RTNGV). Position 346 is a phosphoserine (S346). Residues 348–424 (ATEFANEFTG…LTQKKKQSAN (77 aa)) are disordered. Low complexity predominate over residues 381 to 398 (NSNNTNTNSDSDSNTNST). S401 is modified (phosphoserine; by CK2).

Belongs to the cytidylyltransferase family.

The protein localises to the membrane. It carries out the reaction phosphocholine + CTP + H(+) = CDP-choline + diphosphate. Its pathway is phospholipid metabolism; phosphatidylcholine biosynthesis; phosphatidylcholine from phosphocholine: step 1/2. In terms of biological role, catalyzes the key rate-limiting step in the CDP-choline pathway for phosphatidylcholine biosynthesis. The sequence is that of Choline-phosphate cytidylyltransferase (PCT1) from Saccharomyces cerevisiae (strain ATCC 204508 / S288c) (Baker's yeast).